A 132-amino-acid chain; its full sequence is Intraflagellar transport protein 20 homolog (132 aa).

Positions 87–114 form a coiled coil; the sequence is EAQQQQLYALIAEKKMQLERYRIEYEAL.

It localises to the golgi apparatus. It is found in the cis-Golgi network. The protein resides in the cytoplasm. Its subcellular location is the cytoskeleton. The protein localises to the microtubule organizing center. It localises to the centrosome. It is found in the centriole. The protein resides in the cell projection. Its subcellular location is the cilium. The protein localises to the cytoplasmic vesicle. It localises to the secretory vesicle. It is found in the acrosome. In terms of biological role, involved in ciliary process assembly. May play a role in the trafficking of ciliary membrane proteins from the Golgi complex to the cilium. Regulates the platelet-derived growth factor receptor-alpha (PDGFRA) signaling pathway. Plays an important role in spermatogenesis, particularly spermiogenesis, when germ cells form flagella. The sequence is that of Intraflagellar transport protein 20 homolog (ift20) from Xenopus tropicalis (Western clawed frog).